The following is a 237-amino-acid chain: MRKSVDELSARLGVTFSDQRLLEQALTHSSFLNEHVEERMHLDSNERLEFLGDAIINFLAARLVFERFPDAGEGELTAWRTALIRTETLAGFAQRYNLGAYVLLARGEESSGARQRQALLADTFEAVIAALFLDQGLNAVRTFLLPLFEAELASLPDRTLPVDYKSRLQARIQAERRVTPRYHEIDRSGPEHRPEFTVEVRAGEERLGTGKGPSKQAAEQAAARAALDALEGGTDGR.

One can recognise an RNase III domain in the interval 5-136; sequence VDELSARLGV…VIAALFLDQG (132 aa). Glutamate 49 provides a ligand contact to Mg(2+). Residue aspartate 53 is part of the active site. 2 residues coordinate Mg(2+): aspartate 122 and glutamate 125. Residue glutamate 125 is part of the active site. Residues 163-232 form the DRBM domain; it reads DYKSRLQARI…ARAALDALEG (70 aa). Residues 185–208 are compositionally biased toward basic and acidic residues; the sequence is IDRSGPEHRPEFTVEVRAGEERLG. The interval 185-237 is disordered; it reads IDRSGPEHRPEFTVEVRAGEERLGTGKGPSKQAAEQAAARAALDALEGGTDGR. A compositionally biased stretch (low complexity) spans 216–231; sequence QAAEQAAARAALDALE.

Belongs to the ribonuclease III family. As to quaternary structure, homodimer. Mg(2+) is required as a cofactor.

The protein resides in the cytoplasm. The catalysed reaction is Endonucleolytic cleavage to 5'-phosphomonoester.. Digests double-stranded RNA. Involved in the processing of primary rRNA transcript to yield the immediate precursors to the large and small rRNAs (23S and 16S). Processes some mRNAs, and tRNAs when they are encoded in the rRNA operon. Processes pre-crRNA and tracrRNA of type II CRISPR loci if present in the organism. The polypeptide is Ribonuclease 3 (Roseiflexus sp. (strain RS-1)).